The following is a 175-amino-acid chain: Small ribosomal subunit protein uS5 (175 aa).

The S5 DRBM domain occupies 11-74 (LSEVLVDVNR…QAAKKRMMKV (64 aa)).

It belongs to the universal ribosomal protein uS5 family. Part of the 30S ribosomal subunit. Contacts proteins S4 and S8.

Its function is as follows. With S4 and S12 plays an important role in translational accuracy. Located at the back of the 30S subunit body where it stabilizes the conformation of the head with respect to the body. The polypeptide is Small ribosomal subunit protein uS5 (Rickettsia prowazekii (strain Madrid E)).